Consider the following 493-residue polypeptide: MQIEMKDIHKTFGKNQVLSGVSFQLMPGEVHALMGENGAGKSTLMNILTGLHKADKGQISINGNETYFSNPKEAEQHGIAFIHQELNIWPEMTVLENLFIGKEISSKLGVLQTRKMKALAKEQFDKLSVSLSLDQEAGECSVGQQQMIEIAKALMTNAEVIIMDEPTAALTEREISKLFEVITALKKNGVSIVYISHRMEEIFAICDRITIMRDGKTVDTTNISETDFDEVVKKMVGRELTERYPKRTPSLGDKVFEVKNASVKGSFEDVSFYVRSGEIVGVSGLMGAGRTEMMRALFGVDRLDTGEIWIAGKKTAIKNPQEAVKKGLGFITENRKDEGLLLDTSIRENIALPNLSSFSPKGLIDHKREAEFVDLLIKRLTIKTASPETHARHLSGGNQQKVVIAKWIGIGPKVLILDEPTRGVDVGAKREIYTLMNELTERGVAIIMVSSELPEILGMSDRIIVVHEGRISGEIHAREATQERIMTLATGGR.

ABC transporter domains lie at I3–E239 and K246–R493. Position 35-42 (G35–S42) interacts with ATP.

This sequence belongs to the ABC transporter superfamily. Ribose importer (TC 3.A.1.2.1) family. In terms of assembly, the complex is composed of an ATP-binding protein (RbsA), two transmembrane proteins (RbsC) and a solute-binding protein (RbsB).

The protein resides in the cell membrane. It catalyses the reaction D-ribose(out) + ATP + H2O = D-ribose(in) + ADP + phosphate + H(+). Functionally, part of the ABC transporter complex RbsABC involved in ribose import. Responsible for energy coupling to the transport system. The sequence is that of Ribose import ATP-binding protein RbsA from Bacillus subtilis (strain 168).